The primary structure comprises 490 residues: MRGSWPRLGFPALLLLLHLLTGSDAAVRNGTAKREIGDSRGSSGTCVKGFLQEILPLPATCPPEVLGMRGAVYILYDVNISEGFNLRRDVYIRMAVFVRRLQRRRRFRHVRLVLPPWPRLYHWHSQGLQQSGLPWSHFFDLASLRRYAPVLDYEEFLAEQRLFGNPGAPLVHVGHAFRLQHYEVMLEQGIFRDKFERVTDKPCSEGSLSGGPLLQQAELRVGRFHCVRFQGSAGLLEKLLREAIDEDTAGPEDVDDMRTYALLSAETVLHDHWGDEHFWQARRSMRFARRLEQVAADFRRQALDTTDASAGVQRPAMWELERPKRNAKGGDYLCAHLRRGDFVRSRDATTPTLKAAAQQVKQLLRGFNMTTVFLATDATPYELMELKELFYRFRLVHFAPESNVQRRELKDGGVAVVDQLVCAYARYFVGTYESTFTYRIYEEREILGFTQASTFNTFCKALGGSCSRNAVWPIVWADGDSDSEEDSDPY.

Residues 1–25 (MRGSWPRLGFPALLLLLHLLTGSDA) form the signal peptide. N-linked (GlcNAc...) asparagine glycosylation is found at Asn-29 and Asn-79. 81 to 85 (SEGFN) lines the GDP-beta-L-fucose pocket. Glu-82 functions as the Proton acceptor in the catalytic mechanism. Cys-203 and Cys-226 are joined by a disulfide. 336 to 338 (HLR) is a GDP-beta-L-fucose binding site. Asn-368 carries an N-linked (GlcNAc...) asparagine glycan. GDP-beta-L-fucose-binding positions include Asp-418 and 435–436 (TF). Cys-459 and Cys-466 form a disulfide bridge.

The protein belongs to the glycosyltransferase 68 family.

Its subcellular location is the endoplasmic reticulum. It localises to the golgi apparatus. The enzyme catalyses L-seryl-[protein] + GDP-beta-L-fucose = 3-O-(alpha-L-fucosyl)-L-seryl-[protein] + GDP + H(+). The catalysed reaction is L-threonyl-[protein] + GDP-beta-L-fucose = 3-O-(alpha-L-fucosyl)-L-threonyl-[protein] + GDP + H(+). It participates in protein modification; protein glycosylation. Its activity is regulated as follows. Does not require divalent metal ions for optimal activity. Catalyzes the reaction that attaches fucose through an O-glycosidic linkage to a conserved serine or threonine residue in the consensus sequence C1-X-X-S/T-C2 of thrombospondin type I repeats (TSRs) where C1 and C2 are the first and second cysteines of the repeat, respectively. O-fucosylates members of several protein families including the ADAMTS, the thrombospondin (TSP) and spondin families. The chain is GDP-fucose protein O-fucosyltransferase 2 from Drosophila melanogaster (Fruit fly).